Here is a 234-residue protein sequence, read N- to C-terminus: Glutathione S-transferase U11 (234 aa).

A GST N-terminal domain is found at 11 to 90; sequence EYVKLLGAWP…YVDETWLSGP (80 aa). Glutathione contacts are provided by residues 21–22, 47–48, 61–62, and 74–75; these read SP, LS, QI, and ES. The 133-residue stretch at 96–228 folds into the GST C-terminal domain; that stretch reads DPFDRAVARF…KLVQFARLKF (133 aa).

This sequence belongs to the GST superfamily. Tau family.

It is found in the cytoplasm. It localises to the cytosol. The catalysed reaction is RX + glutathione = an S-substituted glutathione + a halide anion + H(+). In terms of biological role, may be involved in the conjugation of reduced glutathione to a wide number of exogenous and endogenous hydrophobic electrophiles and have a detoxification role against certain herbicides. The protein is Glutathione S-transferase U11 (GSTU11) of Arabidopsis thaliana (Mouse-ear cress).